The following is a 547-amino-acid chain: MEAYFPQTTRDALAGLLPSQMSGRFPEMPAYLTQDVLLRAAGAVGAIYAIYISGLVIYRLFLSPLAKFPGPKIAAMTSYYELYYDVIHKGKYIFQIEKMHDKYGPIVRINPFELSIRDSEYYDELYVMGNIRKTDRYEAFVEGVVDFEGSHLATISHDLHRKRRKPLDPYFSRQGITRLEPMVAELTEKLVVNRLESYKGTGKVVRLDHAFTAFSGDVINRICVNRPSEVYVEDEDFAPWWFDMFHLGAVSLPLFMGMPWLIRLIRFMPASLASYLNTSMGSFSKFKLMCDEQLNEAKREKALKSKSQNSNQPTPGRLTLFRHLVDSDLPPAELSDTRLSREAQVLIGSGTMTTAGTMGFLCYYIMINPKIRARLSEELGSVMAEYPAKKPSLAELERLPYLQAVIKEGLRLSYGTMHRRARVSPSQPLLFKEWVIPPGTPVGMSAYFQHRDEKTFPRPMEFLPERWLGEITPAMYRNYIPFSKGSRHCLGMNLAYCELNFILAAMFRPGAAPFELYGTDESDVRPVHDLIVPMPRLDSLGVRVVYN.

2 consecutive transmembrane segments (helical) span residues 42–62 (GAVG…RLFL) and 242–262 (FDMF…PWLI). A glycan (N-linked (GlcNAc...) asparagine) is linked at Asn277. Residues 345–365 (VLIGSGTMTTAGTMGFLCYYI) form a helical membrane-spanning segment. Cys489 is a binding site for heme.

Belongs to the cytochrome P450 family. Heme is required as a cofactor.

The protein resides in the membrane. The enzyme catalyses ophiobolin F + 4 reduced [NADPH--hemoprotein reductase] + 4 O2 = ophiobolin C + 4 oxidized [NADPH--hemoprotein reductase] + 6 H2O + 4 H(+). It participates in secondary metabolite biosynthesis; terpenoid biosynthesis. Cytochrome P450 monooxygenase; part of the gene cluster that mediates the biosynthesis of the sesterterpenes ophiobolins, fungal phytotoxins with potential anti-cancer activities. The first step of the pathway is performed by the sesterterpene synthase oblA that possesses both prenyl transferase and terpene cyclase activity, converting isopentenyl diphosphate and dimethylallyl diphosphate into geranylfarnesyl diphosphate (GFPP) and further converting GFPP into ophiobolin F, respectively. Other sesterterpenoids (C(25) terpenoids) are found as minor products of oblA. The cytochrome P450 monooxygenase oblB then catalyzes a four-step oxidative transformation of ophiobolin F to yield ophiobolin C. The function of the cytochrome P450 monooxygenase oblE has still to be determined. The protein is Cytochrome P450 monooxygenase oblB of Emericella variicolor (Aspergillus stellatus).